The following is a 433-amino-acid chain: uncharacterized protein (433 aa).

Positions 258–304 (KNIKSKLLLELRQLKNNITNLQNKITKTMDNVKKIIEEIEQSKNKVT) form a coiled coil.

This sequence belongs to the mimivirus R160 family.

It is found in the virion. This is an uncharacterized protein from Acanthamoeba polyphaga mimivirus (APMV).